The primary structure comprises 603 residues: Myotubularin (603 aa).

2 positions are modified to phosphoserine: serine 13 and serine 18. A GRAM domain is found at 29–97; it reads QDVSETVPRL…GVISRIEKMG (69 aa). Residues 163–538 enclose the Myotubularin phosphatase domain; that stretch reads GWTVYNPVEE…RHLELWVNYY (376 aa). Positions 288, 313, and 314 each coordinate a 1,2-diacyl-sn-glycero-3-phospho-(1D-myo-inositol-3,5-bisphosphate). A 1,2-diacyl-sn-glycero-3-phospho-(1D-myo-inositol-3-phosphate) is bound by residues asparagine 288, asparagine 313, and isoleucine 314. Cysteine 375 (phosphocysteine intermediate) is an active-site residue. Positions 376, 377, 378, 379, 380, 381, 417, and 421 each coordinate a 1,2-diacyl-sn-glycero-3-phospho-(1D-myo-inositol-3,5-bisphosphate). The a 1,2-diacyl-sn-glycero-3-phospho-(1D-myo-inositol-3-phosphate) site is built by serine 376, aspartate 377, glycine 378, tryptophan 379, aspartate 380, and arginine 381. Arginine 421 contributes to the a 1,2-diacyl-sn-glycero-3-phospho-(1D-myo-inositol-3-phosphate) binding site. The residue at position 495 (threonine 495) is a Phosphothreonine. Serine 588 is modified (phosphoserine).

The protein belongs to the protein-tyrosine phosphatase family. Non-receptor class myotubularin subfamily. As to quaternary structure, heterodimer with MTMR12. Interacts with KMT2A/MLL1 (via SET domain). Interacts with DES in skeletal muscle but not in cardiac muscle. Interacts with SPEG. Widely expressed with highest levels detected in heart and muscle and low levels in brain (at protein level). Expressed in skeletal muscles (at protein level).

The protein localises to the cytoplasm. It localises to the cell membrane. The protein resides in the cell projection. It is found in the filopodium. Its subcellular location is the ruffle. The protein localises to the late endosome. It localises to the myofibril. The protein resides in the sarcomere. It carries out the reaction a 1,2-diacyl-sn-glycero-3-phospho-(1D-myo-inositol-3-phosphate) + H2O = a 1,2-diacyl-sn-glycero-3-phospho-(1D-myo-inositol) + phosphate. The enzyme catalyses a 1,2-diacyl-sn-glycero-3-phospho-(1D-myo-inositol-3,5-bisphosphate) + H2O = a 1,2-diacyl-sn-glycero-3-phospho-(1D-myo-inositol-5-phosphate) + phosphate. It catalyses the reaction 1,2-dioctanoyl-sn-glycero-3-phospho-(1-D-myo-inositol-3-phosphate) + H2O = 1,2-dioctanoyl-sn-glycero-3-phospho-(1D-myo-inositol) + phosphate. The catalysed reaction is 1,2-dioctanoyl-sn-glycero-3-phospho-(1D-myo-inositol-3,5-bisphosphate) + H2O = 1,2-dioctanoyl-sn-glycero-3-phospho-(1D-myo-inositol-5-phosphate) + phosphate. It carries out the reaction 1,2-dihexadecanoyl-sn-glycero-3-phospho-(1D-myo-inositol-3,5-phosphate) + H2O = 1,2-dihexadecanoyl-sn-glycero-3-phospho-(1D-myo-inositol-5-phosphate) + phosphate. Allosterically activated by phosphatidylinositol 5-phosphate (PI5P). Functionally, lipid phosphatase which dephosphorylates phosphatidylinositol 3-monophosphate (PI3P) and phosphatidylinositol 3,5-bisphosphate (PI(3,5)P2). Has also been shown to dephosphorylate phosphotyrosine- and phosphoserine-containing peptides. Negatively regulates EGFR degradation through regulation of EGFR trafficking from the late endosome to the lysosome. Plays a role in vacuolar formation and morphology. Regulates desmin intermediate filament assembly and architecture. Plays a role in mitochondrial morphology and positioning. Required for skeletal muscle maintenance but not for myogenesis. In skeletal muscles, stabilizes MTMR12 protein levels. The polypeptide is Myotubularin (Mus musculus (Mouse)).